Consider the following 498-residue polypeptide: Minor fimbrium subunit Mfa1 (498 aa).

A signal peptide spans 1-19 (MKLNKMFLVGALLSLGFAS). Residue Cys20 is the site of N-palmitoyl cysteine attachment. Cys20 carries S-diacylglycerol cysteine lipidation. A propeptide spanning residues 20–50 (CSKEGNGPAPDSSSTADTHMSVSMSLPQHNR) is cleaved from the precursor. Residues 436-476 (SGNPFVPTDPDPNNPDTPDNPDTPDPEDPDTPNPEEPLPVQ) are disordered.

It belongs to the bacteroidetes fimbrillin superfamily. FimA/Mfa1 family. Structural component of the fimbrial stalk. Minor fimbriae are composed of a structural subunit, such as the 53 kDa fimbrillin, and the accessory subunits Mfa3, Mfa4 and Mfa5. Fimbrium assembly occurs by linear, head-to-tail oligomerization of fimbrial subunits. This is mediated via insertion of a C-terminal beta-strand from one subunit into a groove in the N-terminal domain of the following subunit.

The protein localises to the fimbrium. It is found in the cell outer membrane. Structural subunit of the minor fimbriae. These filamentous pili are attached to the cell surface; they mediate biofilm formation, adhesion onto host cells and onto other bacteria that are part of the oral microbiome. They play an important role in invasion of periodontal tissues and are recognized as major virulence factors. Mfa1 orthologs from different strains have highly divergent sequences, and this correlates with pathogenicity. The polypeptide is Minor fimbrium subunit Mfa1 (Porphyromonas gingivalis (Bacteroides gingivalis)).